The following is a 251-amino-acid chain: Ditrans,polycis-undecaprenyl-diphosphate synthase ((2E,6E)-farnesyl-diphosphate specific) (251 aa).

Asp-26 is an active-site residue. Asp-26 is a binding site for Mg(2+). Substrate contacts are provided by residues 27-30 (GNGR), Trp-31, Arg-39, His-43, and 71-73 (SSE). Asn-74 serves as the catalytic Proton acceptor. Residues Trp-75, Arg-77, Arg-194, and 200 to 202 (RIS) each bind substrate. Glu-213 contacts Mg(2+).

It belongs to the UPP synthase family. In terms of assembly, homodimer. Requires Mg(2+) as cofactor.

The enzyme catalyses 8 isopentenyl diphosphate + (2E,6E)-farnesyl diphosphate = di-trans,octa-cis-undecaprenyl diphosphate + 8 diphosphate. In terms of biological role, catalyzes the sequential condensation of isopentenyl diphosphate (IPP) with (2E,6E)-farnesyl diphosphate (E,E-FPP) to yield (2Z,6Z,10Z,14Z,18Z,22Z,26Z,30Z,34E,38E)-undecaprenyl diphosphate (di-trans,octa-cis-UPP). UPP is the precursor of glycosyl carrier lipid in the biosynthesis of bacterial cell wall polysaccharide components such as peptidoglycan and lipopolysaccharide. The chain is Ditrans,polycis-undecaprenyl-diphosphate synthase ((2E,6E)-farnesyl-diphosphate specific) from Buchnera aphidicola subsp. Acyrthosiphon pisum (strain APS) (Acyrthosiphon pisum symbiotic bacterium).